Consider the following 1009-residue polypeptide: Mediator of RNA polymerase II transcription subunit 5 (1009 aa).

Belongs to the Mediator complex subunit 5 family. As to quaternary structure, component of the Mediator complex.

The protein resides in the nucleus. Component of the Mediator complex, a coactivator involved in the regulated transcription of nearly all RNA polymerase II-dependent genes. Mediator functions as a bridge to convey information from gene-specific regulatory proteins to the basal RNA polymerase II transcription machinery. Mediator is recruited to promoters by direct interactions with regulatory proteins and serves as a scaffold for the assembly of a functional preinitiation complex with RNA polymerase II and the general transcription factors. This is Mediator of RNA polymerase II transcription subunit 5 (nut1) from Neosartorya fischeri (strain ATCC 1020 / DSM 3700 / CBS 544.65 / FGSC A1164 / JCM 1740 / NRRL 181 / WB 181) (Aspergillus fischerianus).